The sequence spans 444 residues: 23S rRNA (uracil(1939)-C(5))-methyltransferase RlmD (444 aa).

Residues 11–70 form the TRAM domain; that stretch reads NSIKNHILKNIKVEKLDHRGRGLAYFQNKPLFIDGALAGELLEVQIVESKKRYSKGKIKK. 4 residues coordinate [4Fe-4S] cluster: Cys-83, Cys-89, Cys-92, and Cys-171. Gln-277, Phe-306, Asn-311, Glu-327, Asp-354, and Asp-376 together coordinate S-adenosyl-L-methionine. The active-site Nucleophile is the Cys-402.

This sequence belongs to the class I-like SAM-binding methyltransferase superfamily. RNA M5U methyltransferase family. RlmD subfamily.

The catalysed reaction is uridine(1939) in 23S rRNA + S-adenosyl-L-methionine = 5-methyluridine(1939) in 23S rRNA + S-adenosyl-L-homocysteine + H(+). Its function is as follows. Catalyzes the formation of 5-methyl-uridine at position 1939 (m5U1939) in 23S rRNA. This Psychromonas ingrahamii (strain DSM 17664 / CCUG 51855 / 37) protein is 23S rRNA (uracil(1939)-C(5))-methyltransferase RlmD.